Consider the following 496-residue polypeptide: Endoglucanase (496 aa).

The first 23 residues, 1-23 (MGYHSVFIAVFLWSSMVCHNGLA), serve as a signal peptide directing secretion. Asp93 functions as the Nucleophile in the catalytic mechanism. Catalysis depends on residues His415, Asp467, and Glu476.

This sequence belongs to the glycosyl hydrolase 9 (cellulase E) family.

It carries out the reaction Endohydrolysis of (1-&gt;4)-beta-D-glucosidic linkages in cellulose, lichenin and cereal beta-D-glucans.. Functionally, involved in ripening fruit process. The chain is Endoglucanase from Phaseolus vulgaris (Kidney bean).